The sequence spans 349 residues: ATP phosphoribosyltransferase regulatory subunit (349 aa).

The interval 327 to 349 is disordered; sequence GRGRGVRPRRASARGGRARARPR. The segment covering 330–349 has biased composition (basic residues); that stretch reads RGVRPRRASARGGRARARPR.

This sequence belongs to the class-II aminoacyl-tRNA synthetase family. HisZ subfamily. As to quaternary structure, heteromultimer composed of HisG and HisZ subunits.

It localises to the cytoplasm. Its pathway is amino-acid biosynthesis; L-histidine biosynthesis; L-histidine from 5-phospho-alpha-D-ribose 1-diphosphate: step 1/9. In terms of biological role, required for the first step of histidine biosynthesis. May allow the feedback regulation of ATP phosphoribosyltransferase activity by histidine. The sequence is that of ATP phosphoribosyltransferase regulatory subunit from Anaeromyxobacter sp. (strain K).